Consider the following 270-residue polypeptide: S-methyl-5'-thioadenosine phosphorylase (270 aa).

Phosphate contacts are provided by residues Ser-16, Arg-58–His-59, and Ser-91–Ala-92. Disulfide bonds link Cys-138–Cys-205, Cys-200–Cys-262, and Cys-259–Cys-261. Met-190 is a binding site for substrate. Thr-191 provides a ligand contact to phosphate. Position 214–216 (Asp-214–Asp-216) interacts with substrate.

It belongs to the PNP/MTAP phosphorylase family. MTAP subfamily. Homohexamer. Dimer of a homotrimer.

The catalysed reaction is S-methyl-5'-thioadenosine + phosphate = 5-(methylsulfanyl)-alpha-D-ribose 1-phosphate + adenine. It participates in amino-acid biosynthesis; L-methionine biosynthesis via salvage pathway; S-methyl-5-thio-alpha-D-ribose 1-phosphate from S-methyl-5'-thioadenosine (phosphorylase route): step 1/1. In terms of biological role, catalyzes the reversible phosphorylation of S-methyl-5'-thioadenosine (MTA) to adenine and 5-methylthioribose-1-phosphate. Involved in the breakdown of MTA, a major by-product of polyamine biosynthesis. Responsible for the first step in the methionine salvage pathway after MTA has been generated from S-adenosylmethionine. Has broad substrate specificity with 6-aminopurine nucleosides as preferred substrates. This Saccharolobus solfataricus (strain ATCC 35092 / DSM 1617 / JCM 11322 / P2) (Sulfolobus solfataricus) protein is S-methyl-5'-thioadenosine phosphorylase.